Here is a 199-residue protein sequence, read N- to C-terminus: Dephospho-CoA kinase (199 aa).

The DPCK domain occupies Val-3–Asp-199. Gly-11 to Thr-16 lines the ATP pocket.

This sequence belongs to the CoaE family.

Its subcellular location is the cytoplasm. The enzyme catalyses 3'-dephospho-CoA + ATP = ADP + CoA + H(+). The protein operates within cofactor biosynthesis; coenzyme A biosynthesis; CoA from (R)-pantothenate: step 5/5. Its function is as follows. Catalyzes the phosphorylation of the 3'-hydroxyl group of dephosphocoenzyme A to form coenzyme A. This is Dephospho-CoA kinase from Rhodopseudomonas palustris (strain ATCC BAA-98 / CGA009).